A 722-amino-acid chain; its full sequence is Polyribonucleotide nucleotidyltransferase (722 aa).

Residues Asp-487 and Asp-493 each contribute to the Mg(2+) site. In terms of domain architecture, KH spans Pro-554–Ile-613. The region spanning Gly-623–Lys-691 is the S1 motif domain. The segment at Thr-697–Glu-722 is disordered. Residues Leu-701–Gly-713 are compositionally biased toward basic and acidic residues.

The protein belongs to the polyribonucleotide nucleotidyltransferase family. Requires Mg(2+) as cofactor.

The protein resides in the cytoplasm. It carries out the reaction RNA(n+1) + phosphate = RNA(n) + a ribonucleoside 5'-diphosphate. In terms of biological role, involved in mRNA degradation. Catalyzes the phosphorolysis of single-stranded polyribonucleotides processively in the 3'- to 5'-direction. The chain is Polyribonucleotide nucleotidyltransferase from Rhodopseudomonas palustris (strain ATCC BAA-98 / CGA009).